The sequence spans 240 residues: MSTLFIADLHLSVQEPAITAGFLHFIQREAIHADALYILGDLFESWIGDDDPEPLYRQIAAALKSLQQHGVPCYFIHGNRDFLLGKRFAVESGMTLLPEEKVVDLYGRKIVILHGDTLCTDDADYQHFRRRVHNPIIQKLFLWLPLRFRLRIAAYMRNQSQQNNSGKSQLIMDVNPHAVVETFERNSVSWMIHGHTHRPAVHTVELASTTAHRVVLGAWHVEGSMVKVTADKVELIKFPF.

5 residues coordinate Mn(2+): Asp-8, His-10, Asp-41, Asn-79, and His-114. Residue 79 to 80 (NR) participates in substrate binding. Positions 122, 160, 164, 167, and 195 each coordinate substrate. His-195 and His-197 together coordinate Mn(2+).

The protein belongs to the LpxH family. Requires Mn(2+) as cofactor.

It is found in the cell inner membrane. The catalysed reaction is UDP-2-N,3-O-bis[(3R)-3-hydroxytetradecanoyl]-alpha-D-glucosamine + H2O = 2-N,3-O-bis[(3R)-3-hydroxytetradecanoyl]-alpha-D-glucosaminyl 1-phosphate + UMP + 2 H(+). It functions in the pathway glycolipid biosynthesis; lipid IV(A) biosynthesis; lipid IV(A) from (3R)-3-hydroxytetradecanoyl-[acyl-carrier-protein] and UDP-N-acetyl-alpha-D-glucosamine: step 4/6. Hydrolyzes the pyrophosphate bond of UDP-2,3-diacylglucosamine to yield 2,3-diacylglucosamine 1-phosphate (lipid X) and UMP by catalyzing the attack of water at the alpha-P atom. Involved in the biosynthesis of lipid A, a phosphorylated glycolipid that anchors the lipopolysaccharide to the outer membrane of the cell. The chain is UDP-2,3-diacylglucosamine hydrolase from Yersinia enterocolitica serotype O:8 / biotype 1B (strain NCTC 13174 / 8081).